We begin with the raw amino-acid sequence, 598 residues long: Elongation factor 4 (598 aa).

In terms of domain architecture, tr-type G spans 5–187 (SHIRNFSIIA…RLVATIPAPI (183 aa)). Residues 17–22 (DHGKST) and 134–137 (NKID) contribute to the GTP site.

Belongs to the TRAFAC class translation factor GTPase superfamily. Classic translation factor GTPase family. LepA subfamily.

Its subcellular location is the cell inner membrane. The enzyme catalyses GTP + H2O = GDP + phosphate + H(+). In terms of biological role, required for accurate and efficient protein synthesis under certain stress conditions. May act as a fidelity factor of the translation reaction, by catalyzing a one-codon backward translocation of tRNAs on improperly translocated ribosomes. Back-translocation proceeds from a post-translocation (POST) complex to a pre-translocation (PRE) complex, thus giving elongation factor G a second chance to translocate the tRNAs correctly. Binds to ribosomes in a GTP-dependent manner. In Pseudomonas fluorescens (strain Pf0-1), this protein is Elongation factor 4.